Here is a 103-residue protein sequence, read N- to C-terminus: Translation initiation factor 1A (103 aa).

The S1-like domain maps to 11 to 86 (TRVRTPRENE…EKCDVIWRYT (76 aa)).

This sequence belongs to the eIF-1A family.

Seems to be required for maximal rate of protein biosynthesis. Enhances ribosome dissociation into subunits and stabilizes the binding of the initiator Met-tRNA(I) to 40 S ribosomal subunits. The protein is Translation initiation factor 1A (eIF1A) of Methanococcus maripaludis (strain C5 / ATCC BAA-1333).